A 257-amino-acid polypeptide reads, in one-letter code: Type III pantothenate kinase (257 aa).

Position 6–13 (6–13 (EQGNTNTL)) interacts with ATP. 107–110 (GADR) is a binding site for substrate. Asp-109 functions as the Proton acceptor in the catalytic mechanism. K(+) is bound at residue Asp-129. Residue Thr-132 participates in ATP binding. Thr-184 contacts substrate.

It belongs to the type III pantothenate kinase family. Homodimer. Requires NH4(+) as cofactor. The cofactor is K(+).

Its subcellular location is the cytoplasm. It carries out the reaction (R)-pantothenate + ATP = (R)-4'-phosphopantothenate + ADP + H(+). It functions in the pathway cofactor biosynthesis; coenzyme A biosynthesis; CoA from (R)-pantothenate: step 1/5. In terms of biological role, catalyzes the phosphorylation of pantothenate (Pan), the first step in CoA biosynthesis. This chain is Type III pantothenate kinase, found in Phenylobacterium zucineum (strain HLK1).